A 473-amino-acid polypeptide reads, in one-letter code: Lactate utilization protein B (473 aa).

4Fe-4S ferredoxin-type domains follow at residues 303-333 (GTAF…GHSY) and 352-381 (YDDY…LHEL). The [4Fe-4S] cluster site is built by Cys-312, Cys-315, Cys-318, Cys-322, Cys-365, Cys-368, and Cys-372.

Belongs to the LutB/YkgF family.

Its function is as follows. Is involved in L-lactate degradation and allows cells to grow with lactate as the sole carbon source. Has probably a role as an electron transporter during oxidation of L-lactate. The chain is Lactate utilization protein B from Bacillus pumilus (strain SAFR-032).